Consider the following 374-residue polypeptide: Arf-GAP with dual PH domain-containing protein 1 (374 aa).

The region spanning Arg-7–Pro-126 is the Arf-GAP domain. A C4-type zinc finger spans residues Cys-21–Cys-44. Ser-87 bears the Phosphoserine; by PKC mark. PH domains follow at residues Ala-129–Phe-230 and Asn-252–Asp-356. At Lys-272 the chain carries N6-acetyllysine. Residue Thr-276 is modified to Phosphothreonine; by PKC.

Interacts with PRKCA, PRKCI and PRKCZ. Interacts with the N-terminal region of PRKD1. Post-translationally, phosphorylated by PRKCA, PRKCI, PRKCZ and PRKD1 in vitro. Expressed at highest levels in brain and at lower levels in peripheral blood leukocytes.

It localises to the nucleus. Its subcellular location is the cytoplasm. In terms of biological role, GTPase-activating protein for the ADP ribosylation factor family. Binds phosphatidylinositol 3,4,5-trisphosphate (PtdInsP3) and inositol 1,3,4,5-tetrakisphosphate (InsP4). Regulates the incorporation of CD63 and CD9 into multivesicular bodies. In Homo sapiens (Human), this protein is Arf-GAP with dual PH domain-containing protein 1 (ADAP1).